Consider the following 194-residue polypeptide: Orotate phosphoribosyltransferase (194 aa).

5-phospho-alpha-D-ribose 1-diphosphate contacts are provided by residues R102, K103, K106, H108, and 129-137; that span reads EDVVTTGGS. Positions 133 and 161 each coordinate orotate.

It belongs to the purine/pyrimidine phosphoribosyltransferase family. PyrE subfamily. Homodimer. Mg(2+) serves as cofactor.

The enzyme catalyses orotidine 5'-phosphate + diphosphate = orotate + 5-phospho-alpha-D-ribose 1-diphosphate. The protein operates within pyrimidine metabolism; UMP biosynthesis via de novo pathway; UMP from orotate: step 1/2. Functionally, catalyzes the transfer of a ribosyl phosphate group from 5-phosphoribose 1-diphosphate to orotate, leading to the formation of orotidine monophosphate (OMP). The sequence is that of Orotate phosphoribosyltransferase from Synechococcus sp. (strain CC9902).